We begin with the raw amino-acid sequence, 133 residues long: Large ribosomal subunit protein uL14m (133 aa).

Belongs to the universal ribosomal protein uL14 family. Probably part of the large ribosomal subunit.

The protein resides in the hydrogenosome. The protein is Large ribosomal subunit protein uL14m (rpl14) of Nyctotherus ovalis.